The primary structure comprises 428 residues: Adenylosuccinate synthetase (428 aa).

GTP is bound by residues 12 to 18 (GDEGKGK) and 40 to 42 (GHT). Aspartate 13 serves as the catalytic Proton acceptor. 2 residues coordinate Mg(2+): aspartate 13 and glycine 40. IMP contacts are provided by residues 13 to 16 (DEGK), 38 to 41 (NAGH), threonine 130, arginine 144, glutamine 225, threonine 240, and arginine 304. Histidine 41 (proton donor) is an active-site residue. 300-306 (VTTGRAR) is a binding site for substrate. GTP-binding positions include arginine 306, 332–334 (KID), and 414–416 (SVG).

Belongs to the adenylosuccinate synthetase family. Homodimer. Mg(2+) serves as cofactor.

The protein localises to the cytoplasm. The catalysed reaction is IMP + L-aspartate + GTP = N(6)-(1,2-dicarboxyethyl)-AMP + GDP + phosphate + 2 H(+). Its pathway is purine metabolism; AMP biosynthesis via de novo pathway; AMP from IMP: step 1/2. Functionally, plays an important role in the de novo pathway of purine nucleotide biosynthesis. Catalyzes the first committed step in the biosynthesis of AMP from IMP. The polypeptide is Adenylosuccinate synthetase (Clostridium acetobutylicum (strain ATCC 824 / DSM 792 / JCM 1419 / IAM 19013 / LMG 5710 / NBRC 13948 / NRRL B-527 / VKM B-1787 / 2291 / W)).